The chain runs to 420 residues: Ribosome biogenesis protein WDR12 homolog (420 aa).

The ubiquitin-like (UBL) domain stretch occupies residues 10–92; the sequence is VQVHLKTKQE…EDAIEIEYVE (83 aa). WD repeat units lie at residues 104–142, 143–185, 192–231, 250–288, 290–329, 335–375, and 379–417; these read LHDD…LTIS, GHTA…NAVD, GHER…GVEG, GHRE…IKTE, STNK…GSVV, GHNA…APLY, and GHGD…AEDT.

The protein belongs to the WD repeat WDR12/YTM1 family.

The protein localises to the nucleus. Its subcellular location is the nucleolus. It is found in the nucleoplasm. In terms of biological role, required for maturation of ribosomal RNAs and formation of the large ribosomal subunit. The polypeptide is Ribosome biogenesis protein WDR12 homolog (Drosophila sechellia (Fruit fly)).